The sequence spans 312 residues: DNA-directed RNA polymerase subunit alpha (312 aa).

An alpha N-terminal domain (alpha-NTD) region spans residues 1 to 229 (MLQYQIDRIE…ELFQPLATVT (229 aa)). Positions 239–312 (EPSAEAQIPL…ISIPQSRTSA (74 aa)) are alpha C-terminal domain (alpha-CTD).

Belongs to the RNA polymerase alpha chain family. In terms of assembly, in cyanobacteria the RNAP catalytic core is composed of 2 alpha, 1 beta, 1 beta', 1 gamma and 1 omega subunit. When a sigma factor is associated with the core the holoenzyme is formed, which can initiate transcription.

It carries out the reaction RNA(n) + a ribonucleoside 5'-triphosphate = RNA(n+1) + diphosphate. Its function is as follows. DNA-dependent RNA polymerase catalyzes the transcription of DNA into RNA using the four ribonucleoside triphosphates as substrates. The sequence is that of DNA-directed RNA polymerase subunit alpha from Synechococcus sp. (strain CC9605).